The sequence spans 745 residues: Bacteriophage N4 adsorption protein B (745 aa).

3 helical membrane-spanning segments follow: residues F8 to I28, I362 to A382, and F393 to L413.

It localises to the cell inner membrane. In terms of biological role, required for bacteriophage N4 adsorption. May be a component of the phage receptor. This Escherichia coli O157:H7 protein is Bacteriophage N4 adsorption protein B (nfrB).